Consider the following 204-residue polypeptide: 3-isopropylmalate dehydratase small subunit (204 aa).

Belongs to the LeuD family. LeuD type 1 subfamily. In terms of assembly, heterodimer of LeuC and LeuD.

The catalysed reaction is (2R,3S)-3-isopropylmalate = (2S)-2-isopropylmalate. It functions in the pathway amino-acid biosynthesis; L-leucine biosynthesis; L-leucine from 3-methyl-2-oxobutanoate: step 2/4. Catalyzes the isomerization between 2-isopropylmalate and 3-isopropylmalate, via the formation of 2-isopropylmaleate. The polypeptide is 3-isopropylmalate dehydratase small subunit (Roseiflexus castenholzii (strain DSM 13941 / HLO8)).